The chain runs to 171 residues: Cytochrome c oxidase subunit 4 isoform 2, mitochondrial (171 aa).

The N-terminal 28 residues, 1–28, are a transit peptide targeting the mitochondrion; that stretch reads MLPRAAWSLVLRKGGGGRRGMHSSEGTT. The tract at residues 13–32 is disordered; that stretch reads KGGGGRRGMHSSEGTTRGGG. Residues 29-100 are Mitochondrial matrix-facing; sequence RGGGKMSPYT…TFAEMNRRSN (72 aa). Residues 101–126 form a helical membrane-spanning segment; that stretch reads EWKTVMGCVFFFIGFAALVIWWQRVY. The Mitochondrial intermembrane segment spans residues 127–171; that stretch reads VFPPKPITLTDERKAQQLQRMLDMKVNPVQGLASRWDYEKKQWKK.

Belongs to the cytochrome c oxidase IV family. Component of the cytochrome c oxidase (complex IV, CIV), a multisubunit enzyme composed of 14 subunits. The complex is composed of a catalytic core of 3 subunits MT-CO1, MT-CO2 and MT-CO3, encoded in the mitochondrial DNA, and 11 supernumerary subunits COX4I1 (or COX4I2), COX5A, COX5B, COX6A1 (or COX6A2), COX6B1 (or COX6B2), COX6C, COX7A2 (or COX7A1), COX7B, COX7C, COX8A and NDUFA4, which are encoded in the nuclear genome. The complex exists as a monomer or a dimer and forms supercomplexes (SCs) in the inner mitochondrial membrane with NADH-ubiquinone oxidoreductase (complex I, CI) and ubiquinol-cytochrome c oxidoreductase (cytochrome b-c1 complex, complex III, CIII), resulting in different assemblies (supercomplex SCI(1)III(2)IV(1) and megacomplex MCI(2)III(2)IV(2)). In terms of tissue distribution, highly expressed in lung.

It localises to the mitochondrion inner membrane. It participates in energy metabolism; oxidative phosphorylation. Functionally, component of the cytochrome c oxidase, the last enzyme in the mitochondrial electron transport chain which drives oxidative phosphorylation. The respiratory chain contains 3 multisubunit complexes succinate dehydrogenase (complex II, CII), ubiquinol-cytochrome c oxidoreductase (cytochrome b-c1 complex, complex III, CIII) and cytochrome c oxidase (complex IV, CIV), that cooperate to transfer electrons derived from NADH and succinate to molecular oxygen, creating an electrochemical gradient over the inner membrane that drives transmembrane transport and the ATP synthase. Cytochrome c oxidase is the component of the respiratory chain that catalyzes the reduction of oxygen to water. Electrons originating from reduced cytochrome c in the intermembrane space (IMS) are transferred via the dinuclear copper A center (CU(A)) of subunit 2 and heme A of subunit 1 to the active site in subunit 1, a binuclear center (BNC) formed by heme A3 and copper B (CU(B)). The BNC reduces molecular oxygen to 2 water molecules using 4 electrons from cytochrome c in the IMS and 4 protons from the mitochondrial matrix. The polypeptide is Cytochrome c oxidase subunit 4 isoform 2, mitochondrial (Homo sapiens (Human)).